Here is a 287-residue protein sequence, read N- to C-terminus: Iodotyrosine deiodinase (287 aa).

The helical transmembrane segment at 15–34 (HWPSLFITLALIWIVKRLFF) threads the bilayer. Residues 96-100 (RRSIR), serine 125, and 125-126 (SG) each bind FMN. Residues alanine 127, glutamate 154, tyrosine 158, and lysine 179 each contribute to the 3,5-diiodo-L-tyrosine site. 4 residues coordinate 3-iodo-L-tyrosine: alanine 127, glutamate 154, tyrosine 158, and lysine 179. FMN-binding positions include 235 to 237 (VTT) and arginine 277.

The protein belongs to the nitroreductase family. Homodimer. The cofactor is FMN. Expressed in spermatocytes.

It is found in the cell membrane. The enzyme catalyses 2 iodide + L-tyrosine + 2 NADP(+) = 3,5-diiodo-L-tyrosine + 2 NADPH + H(+). The catalysed reaction is iodide + L-tyrosine + NADP(+) = 3-iodo-L-tyrosine + NADPH. It carries out the reaction 3-iodo-L-tyrosine + iodide + NADP(+) = 3,5-diiodo-L-tyrosine + NADPH + H(+). It catalyses the reaction L-tyrosine + chloride + NADP(+) = 3-chloro-L-tyrosine + NADPH. The enzyme catalyses bromide + L-tyrosine + NADP(+) = 3-bromo-L-tyrosine + NADPH. Catalyzes the dehalogenation of halotyrosines such as 3-bromo-L-tyrosine, 3-chloro-L-tyrosine, 3-iodo-L-tyrosine and 3,5-diiodo-L-tyrosine. Activity towards 3-fluoro-L-tyrosine is weak. Important for male and female fertility. May be involved in maintaining the viability of sperm, both during development in the testes and storage in the female spermatheca. This Drosophila melanogaster (Fruit fly) protein is Iodotyrosine deiodinase.